Here is a 245-residue protein sequence, read N- to C-terminus: Dehydrogenase/reductase SDR family member 6 (245 aa).

Residues 16–18 (QGI), Asp37, and Asp58 contribute to the NAD(+) site. Arg144 contributes to the substrate binding site. Tyr147 serves as the catalytic Proton acceptor. Residues Lys151 and 180–184 (VDTPS) each bind NAD(+). Substrate-binding residues include Arg188 and Arg205.

It belongs to the short-chain dehydrogenases/reductases (SDR) family. In terms of assembly, homotetramer.

It is found in the cytoplasm. It catalyses the reaction cis-4-hydroxy-L-proline + NAD(+) = 4-oxo-L-proline + NADH + H(+). The catalysed reaction is (R)-3-hydroxybutanoate + NAD(+) = acetoacetate + NADH + H(+). The protein operates within amino-acid metabolism. Its pathway is siderophore biosynthesis. Functionally, NAD(H)-dependent dehydrogenase/reductase with a preference for cyclic substrates. Catalyzes stereoselective conversion of 4-oxo-L-proline to cis-4-hydroxy-L-proline, likely a detoxification mechanism for ketoprolines. Mediates the formation of 2,5-dihydroxybenzoate (2,5-DHBA), a siderophore that chelates free cytoplasmic iron, thereby regulating iron transport and homeostasis while protecting cells against free radical-induced oxidative stress. The iron-siderophore complex is imported into mitochondria, providing an iron source for mitochondrial metabolic processes in particular heme synthesis. May act as a 3-hydroxybutyrate dehydrogenase. This is Dehydrogenase/reductase SDR family member 6 (bdh2) from Xenopus laevis (African clawed frog).